We begin with the raw amino-acid sequence, 67 residues long: DNA gyrase inhibitor YacG (67 aa).

Positions 9, 12, 28, and 32 each coordinate Zn(2+). The tract at residues 46–67 (RIPSSGDLNDSDDWSEQPLDRQ) is disordered.

The protein belongs to the DNA gyrase inhibitor YacG family. Interacts with GyrB. Zn(2+) is required as a cofactor.

Its function is as follows. Inhibits all the catalytic activities of DNA gyrase by preventing its interaction with DNA. Acts by binding directly to the C-terminal domain of GyrB, which probably disrupts DNA binding by the gyrase. The polypeptide is DNA gyrase inhibitor YacG (Erwinia tasmaniensis (strain DSM 17950 / CFBP 7177 / CIP 109463 / NCPPB 4357 / Et1/99)).